A 589-amino-acid chain; its full sequence is Serine/threonine-protein phosphatase 2A 65 kDa regulatory subunit A alpha isoform (589 aa).

Alanine 2 is modified (N-acetylalanine). 15 HEAT repeats span residues 8-46 (DSLY…GVER), 47-84 (TRSE…GGPE), 85-123 (YVHC…SPSD), 124-161 (LEAH…VSSA), 162-200 (VKAE…ELDN), 201-239 (VKSE…PQED), 240-278 (LEAL…GPEI), 279-321 (TKTD…RENV), 322-360 (IMTQ…GKDS), 361-399 (TIEH…GIRQ), 400-438 (LSQS…GVEF), 439-477 (FDEK…GKEW), 478-516 (AHAT…GQDI), 517-555 (TTKH…DNST), and 556-589 (LQSE…LSLA). The segment at 8–399 (DSLYPIAVLI…CVNEVIGIRQ (392 aa)) is PP2A subunit B binding. The interval 47 to 321 (TRSELLPFLT…NLSADCRENV (275 aa)) is polyoma small and medium T antigens Binding. The segment at 85–239 (YVHCLLPPLE…NIAQLLPQED (155 aa)) is SV40 small T antigen binding. Lysine 280 carries the post-translational modification N6-acetyllysine. A PP2A subunit C binding region spans residues 400–589 (LSQSLLPAIV…QEALTVLSLA (190 aa)).

The protein belongs to the phosphatase 2A regulatory subunit A family. In terms of assembly, PP2A consists of a common heterodimeric core enzyme, composed of PPP2CA a 36 kDa catalytic subunit (subunit C) and PPP2R1A a 65 kDa constant regulatory subunit (PR65 or subunit A), that associates with a variety of regulatory subunits. Proteins that associate with the core dimer include three families of regulatory subunits B (the R2/B/PR55/B55, R3/B''/PR72/PR130/PR59 and R5/B'/B56 families), the 48 kDa variable regulatory subunit, viral proteins, and cell signaling molecules. Found in a complex with at least ARL2, PPP2CB, PPP2R1A, PPP2R2A, PPP2R5E and TBCD. Interacts with the PP2A C catalytic subunit PPP2CA. Interacts with the PP2A B subunit PPP2R2A. Interacts with the PP2A B subunit PPP2R5D. Interacts with FOXO1; the interaction dephosphorylates FOXO1 on AKT-mediated phosphorylation sites. Interacts with IPO9. Interacts with TP53 and SGO1. Interacts with PLA2G16; this interaction might decrease PP2A activity. Interacts with CTTNBP2NL. Interacts with GNA12; the interaction promotes protein phosphatase 2A activation causing dephosphorylation of MAPT. Interacts with CIP2A; this interaction stabilizes CIP2A. Interacts with PABIR1/FAM122A. Interacts with ADCY8; antagonizes interaction between ADCY8 and calmodulin. Interacts with CRTC3 (when phosphorylated at 'Ser-391'). Interacts with SPRY2. Part of the core of STRIPAK complexes composed of PP2A catalytic and scaffolding subunits, the striatins (PP2A regulatory subunits), the striatin-associated proteins MOB4, STRIP1 and STRIP2, PDCD10 and members of the STE20 kinases, such as STK24 and STK26. Component of the Integrator-PP2A (INTAC) complex, composed of the Integrator core complex and protein phosphatase 2A subunits PPP2CA and PPP2R1A.

Its subcellular location is the cytoplasm. It is found in the nucleus. The protein localises to the chromosome. It localises to the centromere. The protein resides in the lateral cell membrane. Its subcellular location is the cell projection. It is found in the dendrite. Its function is as follows. The PR65 subunit of protein phosphatase 2A serves as a scaffolding molecule to coordinate the assembly of the catalytic subunit and a variable regulatory B subunit. Upon interaction with GNA12 promotes dephosphorylation of microtubule associated protein TAU/MAPT. Required for proper chromosome segregation and for centromeric localization of SGO1 in mitosis. Together with RACK1 adapter, mediates dephosphorylation of AKT1 at 'Ser-473', preventing AKT1 activation and AKT-mTOR signaling pathway. Dephosphorylation of AKT1 is essential for regulatory T-cells (Treg) homeostasis and stability. Part of the striatin-interacting phosphatase and kinase (STRIPAK) complexes. STRIPAK complexes have critical roles in protein (de)phosphorylation and are regulators of multiple signaling pathways including Hippo, MAPK, nuclear receptor and cytoskeleton remodeling. Different types of STRIPAK complexes are involved in a variety of biological processes such as cell growth, differentiation, apoptosis, metabolism and immune regulation. Key mediator of a quality checkpoint during transcription elongation as part of the Integrator-PP2A (INTAC) complex. The INTAC complex drives premature transcription termination of transcripts that are unfavorably configured for transcriptional elongation: within the INTAC complex, acts as a scaffolding subunit for PPP2CA, which catalyzes dephosphorylation of the C-terminal domain (CTD) of Pol II subunit POLR2A/RPB1 and SUPT5H/SPT5, thereby preventing transcriptional elongation. Regulates the recruitment of the SKA complex to kinetochores. The polypeptide is Serine/threonine-protein phosphatase 2A 65 kDa regulatory subunit A alpha isoform (PPP2R1A) (Bos taurus (Bovine)).